Here is a 119-residue protein sequence, read N- to C-terminus: Nascent polypeptide-associated complex protein (119 aa).

One can recognise an NAC-A/B domain in the interval 5–73; it reads RMNSREMRRL…FRETPKKQEG (69 aa).

Belongs to the NAC-alpha family. In terms of assembly, homodimer. Interacts with the ribosome. Binds ribosomal RNA.

Contacts the emerging nascent chain on the ribosome. This Thermoplasma volcanium (strain ATCC 51530 / DSM 4299 / JCM 9571 / NBRC 15438 / GSS1) protein is Nascent polypeptide-associated complex protein.